The chain runs to 66 residues: Conotoxin Lt5.6 (66 aa).

The N-terminal stretch at 1-19 is a signal peptide; it reads MLCLPVFIILLLLASPAAP. The propeptide occupies 20-54; it reads KSLETRIQNDLIRAGLTDADLKTEKGFLSGLLNVA.

The protein belongs to the conotoxin T superfamily. In terms of processing, contains 2 disulfide bonds that can be either 'C1-C3, C2-C4' or 'C1-C4, C2-C3', since these disulfide connectivities have been observed for conotoxins with cysteine framework V (for examples, see AC P0DQQ7 and AC P81755). In terms of tissue distribution, expressed by the venom duct.

The protein localises to the secreted. In Conus litteratus (Lettered cone), this protein is Conotoxin Lt5.6.